The following is a 227-amino-acid chain: Probable chorismate pyruvate-lyase (227 aa).

R75, L113, and E173 together coordinate substrate. Residues 192 to 227 form a disordered region; that stretch reads SGDWSAHPRVREHGRPLEHTASRAHPATRASDEQRR. A compositionally biased stretch (basic and acidic residues) spans 200-212; sequence RVREHGRPLEHTA.

This sequence belongs to the UbiC family.

The protein localises to the cytoplasm. It catalyses the reaction chorismate = 4-hydroxybenzoate + pyruvate. It participates in cofactor biosynthesis; ubiquinone biosynthesis. Removes the pyruvyl group from chorismate, with concomitant aromatization of the ring, to provide 4-hydroxybenzoate (4HB) for the ubiquinone pathway. The polypeptide is Probable chorismate pyruvate-lyase (Paraburkholderia xenovorans (strain LB400)).